Consider the following 337-residue polypeptide: Eukaryotic translation initiation factor 3 subunit H (337 aa).

Residues 21–153 (VQCDGLAVMK…LKAYRLTPQA (133 aa)) form the MPN domain.

It belongs to the eIF-3 subunit H family. As to quaternary structure, component of the eukaryotic translation initiation factor 3 (eIF-3) complex. The eIF-3 complex interacts with pix. Interacts with mxt.

It is found in the cytoplasm. Functionally, component of the eukaryotic translation initiation factor 3 (eIF-3) complex, which is involved in protein synthesis of a specialized repertoire of mRNAs and, together with other initiation factors, stimulates binding of mRNA and methionyl-tRNAi to the 40S ribosome. The eIF-3 complex specifically targets and initiates translation of a subset of mRNAs involved in cell proliferation. The sequence is that of Eukaryotic translation initiation factor 3 subunit H from Drosophila ananassae (Fruit fly).